The primary structure comprises 62 residues: Large ribosomal subunit protein eL37 (62 aa).

Zn(2+) is bound by residues Cys20, Cys23, Cys35, and Cys38. A C4-type zinc finger spans residues 20-38; it reads CRRCGRRSYHVRKKACSAC.

This sequence belongs to the eukaryotic ribosomal protein eL37 family. Requires Zn(2+) as cofactor.

Binds to the 23S rRNA. This Methanococcus aeolicus (strain ATCC BAA-1280 / DSM 17508 / OCM 812 / Nankai-3) protein is Large ribosomal subunit protein eL37.